Consider the following 424-residue polypeptide: Hemagglutinin-esterase (424 aa).

The N-terminal stretch at 1–16 is a signal peptide; that stretch reads MFLLPRFVLVSCIIGS. The esterase domain 1 stretch occupies residues 7–127; sequence FVLVSCIIGS…SNDIWMQNKG (121 aa). Residues 17–392 lie on the Virion surface side of the membrane; the sequence is LGFDNPPTNV…PICVYDPLPI (376 aa). Catalysis depends on serine 40, which acts as the Nucleophile. An intrachain disulfide couples cysteine 44 to cysteine 65. 5 N-linked (GlcNAc...) asparagine; by host glycosylation sites follow: asparagine 54, asparagine 89, asparagine 153, asparagine 236, and asparagine 301. Disulfide bonds link cysteine 113–cysteine 162, cysteine 197–cysteine 276, and cysteine 205–cysteine 249. Positions 128–266 are receptor binding; sequence LFYTQLYKNM…GNYLAISNEL (139 aa). Residues 267–379 are esterase domain 2; sequence LLTVPTKAIC…RCPTAADINT (113 aa). The cysteines at positions 307 and 312 are disulfide-linked. A glycan (N-linked (GlcNAc...) asparagine; by host) is linked at asparagine 316. Catalysis depends on charge relay system residues aspartate 326 and histidine 329. A disulfide bridge connects residues cysteine 347 and cysteine 371. Asparagine 358 is a glycosylation site (N-linked (GlcNAc...) asparagine; by host). The chain crosses the membrane as a helical span at residues 393 to 413; sequence ILLGILLGVAVIIIVVLLLYF. At 414 to 424 the chain is on the intravirion side; the sequence is MVDNGTRLHDA. Asparagine 417 carries N-linked (GlcNAc...) asparagine; by host glycosylation.

The protein belongs to the influenza type C/coronaviruses hemagglutinin-esterase family. In terms of assembly, homodimer; disulfide-linked. Forms a complex with the M protein in the pre-Golgi. Associates then with S-M complex to form a ternary complex S-M-HE. Post-translationally, N-glycosylated in the host RER.

The protein localises to the virion membrane. It localises to the host cell membrane. It carries out the reaction N-acetyl-9-O-acetylneuraminate + H2O = N-acetylneuraminate + acetate + H(+). The catalysed reaction is N-acetyl-4-O-acetylneuraminate + H2O = N-acetylneuraminate + acetate + H(+). Functionally, structural protein that makes short spikes at the surface of the virus. Contains receptor binding and receptor-destroying activities. Mediates de-O-acetylation of N-acetyl-4-O-acetylneuraminic acid, which is probably the receptor determinant recognized by the virus on the surface of erythrocytes and susceptible cells. This receptor-destroying activity is important for virus release as it probably helps preventing self-aggregation and ensures the efficient spread of the progeny virus from cell to cell. May serve as a secondary viral attachment protein for initiating infection, the spike protein being the major one. May become a target for both the humoral and the cellular branches of the immune system. The chain is Hemagglutinin-esterase from Bovine coronavirus (strain LSU-94LSS-051) (BCoV-LSU).